Reading from the N-terminus, the 471-residue chain is Heat shock 70 kDa protein 13 (471 aa).

An N-terminal signal peptide occupies residues 1–22; sequence MAGEMTILGSAVLTLLLAGYLA. Basic and acidic residues predominate over residues 317 to 330; sequence DSKEPQNGDSELPK. Positions 317 to 350 are disordered; the sequence is DSKEPQNGDSELPKDQLTPGDGHHVNRVFRPGLS.

The protein belongs to the heat shock protein 70 family. As to quaternary structure, binds UBQLN2.

The protein localises to the microsome. The protein resides in the endoplasmic reticulum. Functionally, has peptide-independent ATPase activity. The protein is Heat shock 70 kDa protein 13 (Hspa13) of Mus musculus (Mouse).